Consider the following 514-residue polypeptide: Putative fumarate hydratase class I (514 aa).

[4Fe-4S] cluster contacts are provided by Cys-62, Cys-187, and Cys-274.

This sequence belongs to the class-I fumarase family. Homodimer. Requires [4Fe-4S] cluster as cofactor.

It catalyses the reaction (S)-malate = fumarate + H2O. It functions in the pathway carbohydrate metabolism; tricarboxylic acid cycle; (S)-malate from fumarate: step 1/1. In terms of biological role, catalyzes the reversible hydration of fumarate to (S)-malate. The chain is Putative fumarate hydratase class I (fumA) from Geobacillus stearothermophilus (Bacillus stearothermophilus).